The following is a 431-amino-acid chain: MTNLLWQKPGVAVDAKIQTFLAGDDVILDREFFLYDIAASKAHAQGLQHIGILSLEELGGLSEQLDLLAGDFRSGAFVLDAHYEDCHSAIEARLTERLGDAGRKIHTGRSRNDQILVATRLWLKDKLQRVAALSTEVAKVALDRAQAEAELPVPGYTHIQRAVVSSAGMWWAGWAEAFIDNAVRANDTFKLVDTNPLGTAAGYGVNLPLDRAHTTAELGFARLQVSPIYAQLSRGKFELAALEALGGATLDLRRIAWDLSLFTSGEFAFVALPAQYTTGSSIMPNKRNPDVIELMRATHASVAAARTEIEQLLSLPSGYHRDLQSSKGAIVHGFARGLAALELLPALLANLEWRPDKLRAAIDSGMYATDVAVEAAVAGVPFRDAYKAAAAASDSAGQGRTPEASLAARVSPGAAADLQLDVLRARWEALQ.

It belongs to the lyase 1 family. Argininosuccinate lyase subfamily.

Its subcellular location is the cytoplasm. It catalyses the reaction 2-(N(omega)-L-arginino)succinate = fumarate + L-arginine. It functions in the pathway amino-acid biosynthesis; L-arginine biosynthesis; L-arginine from L-ornithine and carbamoyl phosphate: step 3/3. The polypeptide is Argininosuccinate lyase (Xanthomonas campestris pv. campestris (strain B100)).